Consider the following 799-residue polypeptide: Protein translocase subunit SecA (799 aa).

ATP-binding positions include Gln85, 103 to 107 (GEGKT), and Asp504.

This sequence belongs to the SecA family. In terms of assembly, monomer and homodimer. Part of the essential Sec protein translocation apparatus which comprises SecA, SecYEG and auxiliary proteins SecDF. Other proteins may also be involved.

The protein resides in the cell membrane. Its subcellular location is the cytoplasm. The enzyme catalyses ATP + H2O + cellular proteinSide 1 = ADP + phosphate + cellular proteinSide 2.. In terms of biological role, part of the Sec protein translocase complex. Interacts with the SecYEG preprotein conducting channel. Has a central role in coupling the hydrolysis of ATP to the transfer of proteins into and across the cell membrane, serving as an ATP-driven molecular motor driving the stepwise translocation of polypeptide chains across the membrane. This is Protein translocase subunit SecA from Lactobacillus acidophilus (strain ATCC 700396 / NCK56 / N2 / NCFM).